Consider the following 293-residue polypeptide: MSALDNRLFAKMNGIGNEIVVVDLRDQPAPVTPADARAVAAHVPYDQLMLLQPARLPGTEAFVRIYNNDGSESGACGNGMRCVARQMFAGSDKNGLTFETRAGLLNCWRGPADGLYTVDMGEPKFGWQDIPLAEEFRDTRMIELQIGPIDAPVLHTPSVVSMGNPHAIFWVDDVNAYDLGRFGPLLENHPIFPERANITLAHIVDRQHITMRTWERGAGLTKACGSAACATAVAAARLKRTDRTVEMTLPGGQLTIEWRDNDNHVLMTGGAEFEFEGRFDPALFAGALDPTGA.

Substrate-binding residues include Asn-17, Gln-47, and Asn-67. Cys-76 functions as the Proton donor in the catalytic mechanism. Substrate contacts are provided by residues 77-78, Asn-164, Asn-197, and 215-216; these read GN and ER. Cys-224 acts as the Proton acceptor in catalysis. 225-226 contacts substrate; sequence GS.

Belongs to the diaminopimelate epimerase family. Homodimer.

Its subcellular location is the cytoplasm. The catalysed reaction is (2S,6S)-2,6-diaminopimelate = meso-2,6-diaminopimelate. Its pathway is amino-acid biosynthesis; L-lysine biosynthesis via DAP pathway; DL-2,6-diaminopimelate from LL-2,6-diaminopimelate: step 1/1. Functionally, catalyzes the stereoinversion of LL-2,6-diaminopimelate (L,L-DAP) to meso-diaminopimelate (meso-DAP), a precursor of L-lysine and an essential component of the bacterial peptidoglycan. This Rhodopseudomonas palustris (strain TIE-1) protein is Diaminopimelate epimerase.